The sequence spans 146 residues: ATP synthase epsilon chain (146 aa).

Residues 103–124 form a disordered region; the sequence is QAERELGQLPEEEDEDSRRARE.

Belongs to the ATPase epsilon chain family. As to quaternary structure, F-type ATPases have 2 components, CF(1) - the catalytic core - and CF(0) - the membrane proton channel. CF(1) has five subunits: alpha(3), beta(3), gamma(1), delta(1), epsilon(1). CF(0) has three main subunits: a, b and c.

The protein resides in the cell membrane. Functionally, produces ATP from ADP in the presence of a proton gradient across the membrane. This Rubrobacter xylanophilus (strain DSM 9941 / JCM 11954 / NBRC 16129 / PRD-1) protein is ATP synthase epsilon chain.